The chain runs to 194 residues: dCTP deaminase (194 aa).

Residues 110–115, Asp128, 136–138, Tyr171, Lys178, and Gln182 contribute to the dCTP site; these read RSSLAR and VLE. Glu138 serves as the catalytic Proton donor/acceptor. The segment at 171-194 is disordered; sequence YNKRKNAKYKDQQEAVASRISQDS.

Belongs to the dCTP deaminase family. In terms of assembly, homotrimer.

The catalysed reaction is dCTP + H2O + H(+) = dUTP + NH4(+). It functions in the pathway pyrimidine metabolism; dUMP biosynthesis; dUMP from dCTP (dUTP route): step 1/2. Its function is as follows. Catalyzes the deamination of dCTP to dUTP. The protein is dCTP deaminase of Shewanella amazonensis (strain ATCC BAA-1098 / SB2B).